Consider the following 154-residue polypeptide: Large ribosomal subunit protein bL9c (154 aa).

The protein belongs to the bacterial ribosomal protein bL9 family.

The protein localises to the plastid. It localises to the chloroplast. Its function is as follows. Binds to the 23S rRNA. The chain is Large ribosomal subunit protein bL9c from Gracilaria tenuistipitata var. liui (Red alga).